A 433-amino-acid polypeptide reads, in one-letter code: 3-phosphoshikimate 1-carboxyvinyltransferase (433 aa).

3-phosphoshikimate-binding residues include lysine 22, serine 23, and arginine 27. Lysine 22 contributes to the phosphoenolpyruvate binding site. Phosphoenolpyruvate contacts are provided by glycine 96 and arginine 130. Residues serine 176, serine 177, glutamine 178, serine 204, aspartate 319, asparagine 342, and lysine 346 each coordinate 3-phosphoshikimate. Glutamine 178 is a phosphoenolpyruvate binding site. The active-site Proton acceptor is the aspartate 319. Residues arginine 350, arginine 394, and lysine 419 each contribute to the phosphoenolpyruvate site.

The protein belongs to the EPSP synthase family. As to quaternary structure, monomer.

The protein resides in the cytoplasm. The catalysed reaction is 3-phosphoshikimate + phosphoenolpyruvate = 5-O-(1-carboxyvinyl)-3-phosphoshikimate + phosphate. It functions in the pathway metabolic intermediate biosynthesis; chorismate biosynthesis; chorismate from D-erythrose 4-phosphate and phosphoenolpyruvate: step 6/7. Its function is as follows. Catalyzes the transfer of the enolpyruvyl moiety of phosphoenolpyruvate (PEP) to the 5-hydroxyl of shikimate-3-phosphate (S3P) to produce enolpyruvyl shikimate-3-phosphate and inorganic phosphate. In Actinobacillus succinogenes (strain ATCC 55618 / DSM 22257 / CCUG 43843 / 130Z), this protein is 3-phosphoshikimate 1-carboxyvinyltransferase.